We begin with the raw amino-acid sequence, 293 residues long: MALRRLAALLSLAVLLSAGLAAVSATSQNTGDTVIIWGRNKDEGSLREACDAGRYTTVIISFLSAFGYIPGTYKLDISGHQVSAVGPDIKYCQSKGKLILLAIGGQGGEYSLPSSQAAVDLHDHLWYSYLGGRRNGVYRPFGDANVNGIDFFIDQGAREHYNELAKMLYDHNKDYRATVGVMVTATTRCGYPDHRLDEALATGLFHRIHVKMFSDGRCPAWSRRQSFEKWAKTYPQSRVLIGVVASPDVDKDAYMPPEALNNLLQFINKQPNFGGVMVWDRFYDKKTGFTAHL.

Positions 1–21 (MALRRLAALLSLAVLLSAGLA) are cleaved as a signal peptide. The GH18 domain occupies 31-293 (GDTVIIWGRN…DKKTGFTAHL (263 aa)). Intrachain disulfides connect C50/C92 and C189/C218.

The protein belongs to the glycosyl hydrolase 18 family. Xylanase inhibitor subfamily. In terms of tissue distribution, expressed in mature grain.

The protein localises to the secreted. In terms of biological role, fungal xylanase inhibitor. Possesses competitive inhibiting activity against several fungal endo-1,4-beta-D-xylanases belonging to glycoside hydrolase family 10 (GH10) and family 11 (GH11). May function in plant defense against secreted fungal pathogen xylanases. Is similar to class III chitinases, but does not exhibit chitinase activity. This Oryza sativa subsp. japonica (Rice) protein is Xylanase inhibitor protein XIP.